The sequence spans 570 residues: MKESPLITLVKRHSETHFANIKYGYYVLIISLVYLIGLALLRAFGRRTPSRSSSAFKNKIIYRLYDIDPAIHLGILFFAVLIPFYYHYSLTTQSTVYLKRLGRLSYALIPLNLFLTLRPNWFLRKNCTYTDFIPFHKWFSRIITVIGLLHGIFFIIKWAIDDNVSLKQKLILKTFNFAGFIISILVLFLLICSIGPMRRYNYRLFYIVHNLVNVAFILLTPIHSRPGVKFPFLLLNCTLLFIHIINRIVFAKSLMILNKNANYSKTNLVHVRLPRAILPDYFEPGSHIRISPYRRINPLYWLLPSHPYTIASLAEDNSIDLIIKETSTAEPGSQIESLRSNPKSFHLDQEKTYTLINSYPPSVPEECYSQGTNIAIICGGSGISFALPLFRHFFNKENVKYLKMIWLIKDYSEYELVLDYLKTNGLTFEKKLSNNKRISVFISGEYTAETRLDEITTNIDDENSEYEMGSFNNEDEDLSISNFNSENADSNDNTPETSHSPTKENGSMIEVKSKHSFTLSNELKSFNNESAQVNQNETWLFSCGPPSLLQLSKKYCNDERINFVCETYGL.

Residues 1–20 lie on the Extracellular side of the membrane; sequence MKESPLITLVKRHSETHFAN. Residues 21–41 form a helical membrane-spanning segment; that stretch reads IKYGYYVLIISLVYLIGLALL. The Cytoplasmic segment spans residues 42 to 69; the sequence is RAFGRRTPSRSSSAFKNKIIYRLYDIDP. The helical transmembrane segment at 70–90 threads the bilayer; that stretch reads AIHLGILFFAVLIPFYYHYSL. The Extracellular segment spans residues 91 to 141; the sequence is TTQSTVYLKRLGRLSYALIPLNLFLTLRPNWFLRKNCTYTDFIPFHKWFSR. The region spanning 101-219 is the Ferric oxidoreductase domain; it reads LGRLSYALIP…NLVNVAFILL (119 aa). Residues 142 to 162 form a helical membrane-spanning segment; the sequence is IITVIGLLHGIFFIIKWAIDD. At 163–176 the chain is on the cytoplasmic side; it reads NVSLKQKLILKTFN. Residues 177–197 traverse the membrane as a helical segment; sequence FAGFIISILVLFLLICSIGPM. At 198-373 the chain is on the extracellular side; the sequence is RRYNYRLFYI…PEECYSQGTN (176 aa). An FAD-binding FR-type domain is found at 250-388; that stretch reads FAKSLMILNK…GGSGISFALP (139 aa). A helical transmembrane segment spans residues 374–394; sequence IAIICGGSGISFALPLFRHFF. The Cytoplasmic portion of the chain corresponds to 395 to 570; it reads NKENVKYLKM…INFVCETYGL (176 aa). A compositionally biased stretch (polar residues) spans 480–505; sequence ISNFNSENADSNDNTPETSHSPTKEN. Residues 480–509 are disordered; the sequence is ISNFNSENADSNDNTPETSHSPTKENGSMI.

This sequence belongs to the ferric reductase (FRE) family. AIM14 subfamily. Interacts with ribosomes.

It is found in the membrane. Functionally, probable cell surface metalloreductase. May be involved in iron or copper homeostasis. This Saccharomyces cerevisiae (strain ATCC 204508 / S288c) (Baker's yeast) protein is Probable metalloreductase AIM14 (AIM14).